Here is a 224-residue protein sequence, read N- to C-terminus: N6-methyladenosine RNA demethylase ALKBH (224 aa).

The Fe2OG dioxygenase domain maps to 93–222; that stretch reads LAQAAIVNFY…RINLNVRQMR (130 aa). Fe cation-binding residues include His111, Asp113, and His178. Arg213 lines the 2-oxoglutarate pocket.

Belongs to the alkB family. Fe(2+) is required as a cofactor.

It carries out the reaction an N(6)-methyladenosine in mRNA + 2-oxoglutarate + O2 = an adenosine in mRNA + formaldehyde + succinate + CO2. Functionally, RNA demethylase that regulates the stability of mRNAs through an m(6)A-dependent manner. M6A is a modification present at internal sites of mRNAs and some non-coding RNAs and plays a role in mRNA stability and processing. Demethylate m6A at position A1935 within the 3'UTR of transcription factor ZAP1 and plays an important role in C.parasitica development and virulence. Target mRNAs are primarily associated with amino-acid biosynthesis, 2-oxocarboxylic acid metabolism, and ABC transporters, as well as alpha-amino acid metabolism, small-molecule biosynthesis, and the sulfite reductase complex (NADPH). The polypeptide is N6-methyladenosine RNA demethylase ALKBH (Cryphonectria parasitica (strain ATCC 38755 / EP155)).